Here is a 208-residue protein sequence, read N- to C-terminus: Protein-L-isoaspartate O-methyltransferase (208 aa).

Serine 59 is a catalytic residue.

Belongs to the methyltransferase superfamily. L-isoaspartyl/D-aspartyl protein methyltransferase family.

The protein localises to the cytoplasm. It carries out the reaction [protein]-L-isoaspartate + S-adenosyl-L-methionine = [protein]-L-isoaspartate alpha-methyl ester + S-adenosyl-L-homocysteine. Functionally, catalyzes the methyl esterification of L-isoaspartyl residues in peptides and proteins that result from spontaneous decomposition of normal L-aspartyl and L-asparaginyl residues. It plays a role in the repair and/or degradation of damaged proteins. In Salmonella arizonae (strain ATCC BAA-731 / CDC346-86 / RSK2980), this protein is Protein-L-isoaspartate O-methyltransferase.